Reading from the N-terminus, the 829-residue chain is Genome polyprotein (829 aa).

Serine 2 is subject to N-acetylserine; by host. The segment at 2–23 (STNPKPQRKTKRNTNRRPQDVK) is interaction with STAT1. The segment at 2-58 (STNPKPQRKTKRNTNRRPQDVKFPGGGQIVGGVYLLPRRGPRLGVRATRKTSERSQP) is interaction with EIF2AK2/PKR. The interaction with DDX3X stretch occupies residues 2-59 (STNPKPQRKTKRNTNRRPQDVKFPGGGQIVGGVYLLPRRGPRLGVRATRKTSERSQPR). The disordered stretch occupies residues 2 to 75 (STNPKPQRKT…PKARRPKGRN (74 aa)). Over 2–168 (STNPKPQRKT…EDGVNYATGN (167 aa)) the chain is Cytoplasmic. Short sequence motifs (nuclear localization signal) lie at residues 5 to 13 (PKPQRKTKR) and 38 to 43 (PRRGPR). The span at 7–16 (PQRKTKRNTN) shows a compositional bias: basic residues. The span at 32–47 (GGVYLLPRRGPRLGVR) shows a compositional bias: low complexity. Serine 53 carries the phosphoserine; by host modification. Short sequence motifs (nuclear localization signal) lie at residues 58 to 64 (PRGRRQP) and 66 to 71 (PKARRP). Residues 58 to 73 (PRGRRQPIPKARRPKG) are compositionally biased toward basic residues. The residue at position 99 (serine 99) is a Phosphoserine; by host. Residues 112-152 (PRRRSRNLGKVIDTLTCGFVDLMGYIPLVGAPLRGAARALA) are important for endoplasmic reticulum and mitochondrial localization. Serine 116 carries the post-translational modification Phosphoserine; by host PKA. An interaction with APOA2 region spans residues 122-173 (VIDTLTCGFVDLMGYIPLVGAPLRGAARALAHGVRVLEDGVNYATGNLPGCS). The segment at 164–167 (YATG) is important for lipid droplets localization. A helical membrane pass occupies residues 169–189 (LPGCSFSIFLLALLSCLTVPA). Residues 178-191 (LLALLSCLTVPASA) constitute a propeptide, ER anchor for the core protein, removed in mature form by host signal peptidase. Residues 190 to 358 (SAYQVRNSTG…AGAHWGVLAG (169 aa)) lie on the Lumenal side of the membrane. Residues asparagine 196, asparagine 209, and asparagine 234 are each glycosylated (N-linked (GlcNAc...) asparagine; by host). Residues 265 to 296 (LVGSATLCSALYVGDLCGSVFLVGQLFTFSPR) form an important for fusion region. A glycan (N-linked (GlcNAc...) asparagine; by host) is linked at asparagine 305. A helical transmembrane segment spans residues 359-379 (MAYFSMVGNWAKVLAVLLLFA). Over 380 to 725 (GVDAETHVTG…WEYVVLLFLL (346 aa)) the chain is Lumenal. Residues 385-411 (THVTGGAAARSTLQLAGLFQPGAKQNV) form an HVR1 region. N-linked (GlcNAc...) (high mannose) asparagine; by host glycans are attached at residues asparagine 417, asparagine 423, asparagine 430, and asparagine 448. 4 disulfides stabilise this stretch: cysteine 429–cysteine 552, cysteine 452–cysteine 459, cysteine 486–cysteine 494, and cysteine 503–cysteine 508. Residues 474–479 (YAGGGG) form an HVR2 region. Residues 480–493 (PDHRPYCWHYPPKP) are CD81-binding 1. Asparagine 540 is a glycosylation site (N-linked (GlcNAc...) asparagine; by host). The tract at residues 544-551 (PPLGNWFG) is CD81-binding 2. Asparagine 556 carries N-linked (GlcNAc...) (high mannose) asparagine; by host glycosylation. A disulfide bond links cysteine 564 and cysteine 569. Residue asparagine 576 is glycosylated (N-linked (GlcNAc...) (high mannose) asparagine; by host). 3 cysteine pairs are disulfide-bonded: cysteine 581/cysteine 585, cysteine 597/cysteine 620, and cysteine 607/cysteine 644. Asparagine 623 and asparagine 645 each carry an N-linked (GlcNAc...) (high mannose) asparagine; by host glycan. Residues cysteine 652 and cysteine 677 are joined by a disulfide bond. Residues 660–671 (SELSPLLLSTTQ) are PKR/eIF2-alpha phosphorylation homology domain (PePHD). The helical transmembrane segment at 726–746 (LADARVCSCLWMMLLISQAEA) threads the bilayer. The Lumenal segment spans residues 747–757 (ALENLVVLNAA). The helical transmembrane segment at 758-778 (SLAGTHGLVSFLVFFCFAWFL) threads the bilayer. At 779–781 (RGK) the chain is on the cytoplasmic side. A helical membrane pass occupies residues 782–803 (WVPGAVYALYGMWPLLLLLLAL). The Lumenal portion of the chain corresponds to 804–813 (PQRAYALDTE). The chain crosses the membrane as a helical span at residues 814-829 (VAASCGGVVLVGLMAL).

Belongs to the hepacivirus polyprotein family. Homooligomer. Interacts with E1 (via C-terminus). Interacts with the non-structural protein 5A. Interacts (via N-terminus) with host STAT1 (via SH2 domain); this interaction results in decreased STAT1 phosphorylation and ubiquitin-mediated proteasome-dependent STAT1 degradation, leading to decreased IFN-stimulated gene transcription. Interacts with host STAT3; this interaction constitutively activates STAT3. Interacts with host LTBR receptor. Interacts with host TNFRSF1A receptor and possibly induces apoptosis. Interacts with host HNRPK. Interacts with host YWHAE. Interacts with host UBE3A/E6AP. Interacts with host DDX3X. Interacts with host APOA2. Interacts with host RXRA protein. Interacts with host SP110 isoform 3/Sp110b; this interaction sequesters the transcriptional corepressor SP110 away from the nucleus. Interacts with host CREB3 nuclear transcription protein; this interaction triggers cell transformation. Interacts with host ACY3. Interacts with host C1QR1. Interacts with host RBM24; this interaction, which enhances the interaction of the mature core protein with 5'-UTR, may inhibit viral translation and favor replication. Interacts with host EIF2AK2/PKR; this interaction induces the autophosphorylation of EIF2AK2. Part of the viral assembly initiation complex composed of NS2, E1, E2, NS3, NS4A, NS5A and the mature core protein. In terms of assembly, forms a heterodimer with envelope glycoprotein E2. Interacts with mature core protein. Interacts with protease NS2. The heterodimer E1/E2 interacts with host CLDN1; this interaction plays a role in viral entry into host cell. Interacts with host SPSB2 (via C-terminus). Part of the viral assembly initiation complex composed of NS2, E1, E2, NS3, NS4A, NS5A and the mature core protein. As to quaternary structure, forms a heterodimer with envelope glycoprotein E1. Interacts with host CD81 and SCARB1 receptors; these interactions play a role in viral entry into host cell. Interacts with host EIF2AK2/PKR; this interaction inhibits EIF2AK2 and probably allows the virus to evade the innate immune response. Interacts with host CD209/DC-SIGN and CLEC4M/DC-SIGNR. Interact with host SPCS1; this interaction is essential for viral particle assembly. Interacts with protease NS2. The heterodimer E1/E2 interacts with host CLDN1; this interaction plays a role in viral entry into host cell. Part of the viral assembly initiation complex composed of NS2, E1, E2, NS3, NS4A, NS5A and the mature core protein. Homohexamer. Homoheptamer. Interacts with protease NS2. In terms of assembly, homodimer. Interacts with host SPCS1; this interaction is essential for viral particle assembly. Interacts with envelope glycoprotein E1. Interacts with envelope glycoprotein E2. Interacts with viroporin p7. Interacts with serine protease/helicase NS3. Part of the replication complex composed of NS2, NS3, NS4A, NS4B, NS5A and the RNA-directed RNA polymerase embedded in an ER-derived membranous web. Part of the viral assembly initiation complex composed of NS2, E1, E2, NS3, NS4A, NS5A and the mature core protein. Zn(2+) serves as cofactor. Specific enzymatic cleavages in vivo yield mature proteins. The structural proteins, core, E1, E2 and p7 are produced by proteolytic processing by host signal peptidases. The core protein precursor is synthesized as a 23 kDa, which is retained in the ER membrane through the hydrophobic signal peptide. Cleavage by the signal peptidase releases the 21 kDa mature core protein. The cleavage of the core protein precursor occurs between aminoacids 176 and 188 but the exact cleavage site is not known. Some degraded forms of the core protein appear as well during the course of infection. The other proteins (p7, NS2, NS3, NS4A, NS4B, NS5A and NS5B) are cleaved by the viral proteases. Autoprocessing between NS2 and NS3 is mediated by the NS2 cysteine protease catalytic domain and regulated by the NS3 N-terminal domain. In terms of processing, phosphorylated by host PKC and PKA. Post-translationally, ubiquitinated; mediated by UBE3A and leading to core protein subsequent proteasomal degradation. Highly N-glycosylated. In terms of processing, palmitoylation is required for NS2/3 autoprocessing and E2 recruitment to membranes.

The protein resides in the host endoplasmic reticulum membrane. The protein localises to the host mitochondrion membrane. Its subcellular location is the virion. It is found in the host cytoplasm. It localises to the host nucleus. The protein resides in the host lipid droplet. The protein localises to the virion membrane. Its subcellular location is the host mitochondrion. It is found in the host cell membrane. With respect to regulation, inhibited by the antiviral drug hexamethylene amiloride. Inhibition by amantadine appears to be genotype-dependent. Also inhibited by long-alkyl-chain iminosugar derivatives. Functionally, packages viral RNA to form a viral nucleocapsid, and promotes virion budding. Participates in the viral particle production as a result of its interaction with the non-structural protein 5A. Binds RNA and may function as a RNA chaperone to induce the RNA structural rearrangements taking place during virus replication. Modulates viral translation initiation by interacting with viral IRES and 40S ribosomal subunit. Affects various cell signaling pathways, host immunity and lipid metabolism. Prevents the establishment of cellular antiviral state by blocking the interferon-alpha/beta (IFN-alpha/beta) and IFN-gamma signaling pathways and by blocking the formation of phosphorylated STAT1 and promoting ubiquitin-mediated proteasome-dependent degradation of STAT1. Activates STAT3 leading to cellular transformation. Regulates the activity of cellular genes, including c-myc and c-fos. May repress the promoter of p53, and sequester CREB3 and SP110 isoform 3/Sp110b in the cytoplasm. Represses cell cycle negative regulating factor CDKN1A, thereby interrupting an important check point of normal cell cycle regulation. Targets transcription factors involved in the regulation of inflammatory responses and in the immune response: suppresses TNF-induced NF-kappa-B activation, and activates AP-1. Binds to dendritic cells (DCs) via C1QR1, resulting in down-regulation of T-lymphocytes proliferation. Alters lipid metabolism by interacting with hepatocellular proteins involved in lipid accumulation and storage. Induces up-regulation of FAS promoter activity, and thereby contributes to the increased triglyceride accumulation in hepatocytes (steatosis). In terms of biological role, forms a heterodimer with envelope glycoprotein E2, which mediates virus attachment to the host cell, virion internalization through clathrin-dependent endocytosis and fusion with host membrane. Fusion with the host cell is most likely mediated by both E1 and E2, through conformational rearrangements of the heterodimer required for fusion rather than a classical class II fusion mechanism. E1/E2 heterodimer binds host apolipoproteins such as APOB and ApoE thereby forming a lipo-viro-particle (LVP). APOE associated to the LVP allows the initial virus attachment to cell surface receptors such as the heparan sulfate proteoglycans (HSPGs), syndecan-1 (SDC1), syndecan-1 (SDC2), the low-density lipoprotein receptor (LDLR) and scavenger receptor class B type I (SCARB1). The cholesterol transfer activity of SCARB1 allows E2 exposure and binding of E2 to SCARB1 and the tetraspanin CD81. E1/E2 heterodimer binding on CD81 activates the epithelial growth factor receptor (EGFR) signaling pathway. Diffusion of the complex E1-E2-EGFR-SCARB1-CD81 to the cell lateral membrane allows further interaction with Claudin 1 (CLDN1) and occludin (OCLN) to finally trigger HCV entry. Forms a heterodimer with envelope glycoprotein E1, which mediates virus attachment to the host cell, virion internalization through clathrin-dependent endocytosis and fusion with host membrane. Fusion with the host cell is most likely mediated by both E1 and E2, through conformational rearrangements of the heterodimer required for fusion rather than a classical class II fusion mechanism. The interaction between envelope glycoprotein E2 and host apolipoprotein E/APOE allows the proper assembly, maturation and infectivity of the viral particles. This interaction is probably promoted via the up-regulation of cellular autophagy by the virus. E1/E2 heterodimer binds host apolipoproteins such as APOB and APOE thereby forming a lipo-viro-particle (LVP). APOE associated to the LVP allows the initial virus attachment to cell surface receptors such as the heparan sulfate proteoglycans (HSPGs), syndecan-1 (SDC1), syndecan-1 (SDC2), the low-density lipoprotein receptor (LDLR) and scavenger receptor class B type I (SCARB1). The cholesterol transfer activity of SCARB1 allows E2 exposure and binding of E2 to SCARB1 and the tetraspanin CD81. E1/E2 heterodimer binding on CD81 activates the epithelial growth factor receptor (EGFR) signaling pathway. Diffusion of the complex E1-E2-EGFR-SCARB1-CD81 to the cell lateral membrane allows further interaction with Claudin 1 (CLDN1) and occludin (OCLN) to finally trigger HCV entry. Inhibits host EIF2AK2/PKR activation, preventing the establishment of an antiviral state. Viral ligand for CD209/DC-SIGN and CLEC4M/DC-SIGNR, which are respectively found on dendritic cells (DCs), and on liver sinusoidal endothelial cells and macrophage-like cells of lymph node sinuses. These interactions allow the capture of circulating HCV particles by these cells and subsequent facilitated transmission to permissive cells such as hepatocytes and lymphocyte subpopulations. Its function is as follows. Ion channel protein that acts as a viroporin and plays an essential role in the assembly, envelopment and secretion of viral particles. Regulates the host cell secretory pathway, which induces the intracellular retention of viral glycoproteins and favors assembly of viral particles. Creates a pore in acidic organelles and releases Ca(2+) and H(+) in the cytoplasm of infected cells, leading to a productive viral infection. High levels of cytoplasmic Ca(2+) may trigger membrane trafficking and transport of viral ER-associated proteins to viroplasms, sites of viral genome replication. This ionic imbalance induces the assembly of the inflammasome complex, which triggers the maturation of pro-IL-1beta into IL-1beta through the action of caspase-1. Targets also host mitochondria and induces mitochondrial depolarization. In addition of its role as a viroporin, acts as a lipid raft adhesion factor. Functionally, cysteine protease required for the proteolytic auto-cleavage between the non-structural proteins NS2 and NS3. The N-terminus of NS3 is required for the function of NS2 protease (active region NS2-3). Promotes the initiation of viral particle assembly by mediating the interaction between structural and non-structural proteins. In Hepatitis C virus (isolate Glasgow) (HCV), this protein is Genome polyprotein.